The following is a 244-amino-acid chain: Carbonic anhydrase (244 aa).

The N-terminal stretch at 1–19 is a signal peptide; sequence MKGKFSIALMLSACFSASA. One can recognise an Alpha-carbonic anhydrase domain in the interval 23 to 244; the sequence is VHWGYEGSGD…QPLNGRIIIH (222 aa). Cys46 and Cys199 are disulfide-bonded. The Proton acceptor role is filled by His84. 3 residues coordinate Zn(2+): His109, His111, and His128. A substrate-binding site is contributed by 195–196; that stretch reads TT.

This sequence belongs to the alpha-carbonic anhydrase family. The cofactor is Zn(2+).

The protein resides in the periplasm. It carries out the reaction hydrogencarbonate + H(+) = CO2 + H2O. Functionally, reversible hydration of carbon dioxide. The protein is Carbonic anhydrase (cah) of Pectobacterium atrosepticum (strain SCRI 1043 / ATCC BAA-672) (Erwinia carotovora subsp. atroseptica).